A 295-amino-acid polypeptide reads, in one-letter code: MQRQRANDTVTTFRYNTRSSSRHGISNTLRVVESKTSASSPRVRRWRKKVSDDRRSTNSDLLPMDLIKEILKRLPAKTLARFLCVSKLWSSIIRSRDLMKLFLTESSARPGRLFFTFRRKDDCFLFSSEESSVATYLFTIPASGYTNNCSFVHGLICYGTTAYASQLVVYNSSTRRSITLPEIEARSFVLKHLLGYDPIDGVYKVLCMTVPRLVLQKKKKLRNNVTDAGELILAPISLPDPPYYVIYYDPQRQSTRKVVIRGITEHNCKLLRCKKRHPCILYYVFSSQVESLMFM.

Residues 56–102 (STNSDLLPMDLIKEILKRLPAKTLARFLCVSKLWSSIIRSRDLMKLF) enclose the F-box domain.

In Arabidopsis thaliana (Mouse-ear cress), this protein is Putative F-box protein At5g44220.